Reading from the N-terminus, the 202-residue chain is Endoribonuclease YbeY (202 aa).

3 residues coordinate Zn(2+): His120, His124, and His130.

Belongs to the endoribonuclease YbeY family. Zn(2+) is required as a cofactor.

The protein resides in the cytoplasm. In terms of biological role, single strand-specific metallo-endoribonuclease involved in late-stage 70S ribosome quality control and in maturation of the 3' terminus of the 16S rRNA. The polypeptide is Endoribonuclease YbeY (Corynebacterium kroppenstedtii (strain DSM 44385 / JCM 11950 / CIP 105744 / CCUG 35717)).